We begin with the raw amino-acid sequence, 67 residues long: Bowman-Birk type proteinase inhibitor A4 (67 aa).

Cystine bridges form between Cys10/Cys29, Cys16/Cys27, Cys36/Cys43, and Cys40/Cys57.

The protein belongs to the Bowman-Birk serine protease inhibitor family. Expressed in bulb (at protein level).

Functionally, serine protease inhibitor. Inhibits trypsin (Ki=12nM) and weakly inhibits chymotrypsin with (Ki=460nm). Does not inhibit bacterial subtilisin. This Hyacinthus orientalis (Common hyacinth) protein is Bowman-Birk type proteinase inhibitor A4.